The chain runs to 206 residues: Thymidylate kinase (206 aa).

Residue 11-18 (GIDGAGKT) participates in ATP binding.

Belongs to the thymidylate kinase family.

It catalyses the reaction dTMP + ATP = dTDP + ADP. In terms of biological role, phosphorylation of dTMP to form dTDP in both de novo and salvage pathways of dTTP synthesis. The chain is Thymidylate kinase from Paraburkholderia phytofirmans (strain DSM 17436 / LMG 22146 / PsJN) (Burkholderia phytofirmans).